The sequence spans 214 residues: uncharacterized protein (214 aa).

The first 24 residues, 1-24 (MKIWIKAICITSFVIQMSACSSSA), serve as a signal peptide directing secretion. Residues 64–197 (ETVKGKVLHI…KEAKAGVWSI (134 aa)) form the TNase-like domain. Catalysis depends on residues Arg-91, Glu-99, and Arg-142.

This is an uncharacterized protein from Bacillus anthracis.